The chain runs to 189 residues: MTKLIVGLGNPGDKYFETKHNVGFMLVDKLCKDLNLKFTVDKIFQSEIASTFLNGEKIYFIKPTTFMNESGKAVHALLTYYGLEVEDLLVIYDDLDMEVGKIRLRAKGSAGGHNGIKSIIKHIGTQDFKRVKIGIGRPKEGMTVVHHVLGKFDRDDYITILNTLDKVDNAVNYYLQSGNFEQAMQKYNG.

Y15 serves as a coordination point for tRNA. The active-site Proton acceptor is the H20. F66, N68, and N114 together coordinate tRNA.

Belongs to the PTH family. Monomer.

It localises to the cytoplasm. It carries out the reaction an N-acyl-L-alpha-aminoacyl-tRNA + H2O = an N-acyl-L-amino acid + a tRNA + H(+). Hydrolyzes ribosome-free peptidyl-tRNAs (with 1 or more amino acids incorporated), which drop off the ribosome during protein synthesis, or as a result of ribosome stalling. In terms of biological role, catalyzes the release of premature peptidyl moieties from peptidyl-tRNA molecules trapped in stalled 50S ribosomal subunits, and thus maintains levels of free tRNAs and 50S ribosomes. The chain is Peptidyl-tRNA hydrolase from Streptococcus gordonii (strain Challis / ATCC 35105 / BCRC 15272 / CH1 / DL1 / V288).